The sequence spans 187 residues: Cell division protein SepF (187 aa).

This sequence belongs to the SepF family. In terms of assembly, homodimer. Interacts with FtsZ.

The protein resides in the cytoplasm. Functionally, cell division protein that is part of the divisome complex and is recruited early to the Z-ring. Probably stimulates Z-ring formation, perhaps through the cross-linking of FtsZ protofilaments. Its function overlaps with FtsA. In Streptococcus suis (strain 98HAH33), this protein is Cell division protein SepF.